The following is an 875-amino-acid chain: Kelch-like protein 29 (875 aa).

Positions 115–126 (WGQTPINQSTPW) are enriched in polar residues. 2 disordered regions span residues 115–145 (WGQTPINQSTPWDTDEPPSKQMRESDNPGTG) and 248–291 (GPTA…DSAH). The segment covering 131–140 (PPSKQMRESD) has biased composition (basic and acidic residues). The 73-residue stretch at 329 to 401 (TDLKIVVEGR…VYTGSLVIDS (73 aa)) folds into the BTB domain. 6 Kelch repeats span residues 585-635 (VIVL…VSAG), 637-683 (NIYL…VYDG), 684-730 (KIYT…VCGG), 732-778 (IYVF…TLNG), 779-821 (FVFI…VLDG), and 822-870 (KIYA…VIKK).

In Homo sapiens (Human), this protein is Kelch-like protein 29 (KLHL29).